Consider the following 87-residue polypeptide: Serine rich endogenous peptide 17 (87 aa).

The first 28 residues, 1–28 (MTGKAPFFVILIAALLLLSSFFFGEVKA), serve as a signal peptide directing secretion. Positions 32–87 (KQPKHRKLGNREGDENRSNEIVVQMKARVKRSKSKRGPQKKEPYKKPPCSPPTHPA) are disordered. Positions 40–49 (GNREGDENRS) are enriched in basic and acidic residues. The short motif at 51 to 71 (EIVVQMKARVKRSKSKRGPQK) is the SCOOP motif element. Over residues 58-69 (ARVKRSKSKRGP) the composition is skewed to basic residues. Positions 63–65 (SKS) match the SxS motif essential for MIK2 binding motif. The segment covering 77–87 (KPPCSPPTHPA) has biased composition (pro residues).

The protein belongs to the serine rich endogenous peptide (SCOOP) phytocytokine family. Interacts with MIK2 (via extracellular leucine-rich repeat domain); this interaction triggers the formation of complex between MIK2 and the BAK1/SERK3 and SERK4 coreceptors, and subsequent BAK1 activation by phosphorylation.

It is found in the cell membrane. The protein localises to the secreted. The protein resides in the extracellular space. Its subcellular location is the apoplast. Functionally, brassicaceae-specific phytocytokine (plant endogenous peptide released into the apoplast) perceived by MIK2 in a BAK1/SERK3 and SERK4 coreceptors-dependent manner, that modulates various physiological and antimicrobial processes including growth prevention and reactive oxygen species (ROS) response regulation. The chain is Serine rich endogenous peptide 17 from Arabidopsis thaliana (Mouse-ear cress).